We begin with the raw amino-acid sequence, 255 residues long: tRNA (guanine-N(1)-)-methyltransferase (255 aa).

Residues Gly113 and 133–138 each bind S-adenosyl-L-methionine; that span reads IGDYVL.

It belongs to the RNA methyltransferase TrmD family. In terms of assembly, homodimer.

It is found in the cytoplasm. The enzyme catalyses guanosine(37) in tRNA + S-adenosyl-L-methionine = N(1)-methylguanosine(37) in tRNA + S-adenosyl-L-homocysteine + H(+). Its function is as follows. Specifically methylates guanosine-37 in various tRNAs. The chain is tRNA (guanine-N(1)-)-methyltransferase from Chloroflexus aggregans (strain MD-66 / DSM 9485).